Consider the following 286-residue polypeptide: Light-independent protochlorophyllide reductase iron-sulfur ATP-binding protein (286 aa).

Residues 10–15 (GIGKST) and K39 each bind ATP. S14 provides a ligand contact to Mg(2+). Residues C95 and C129 each coordinate [4Fe-4S] cluster. 180–181 (NR) serves as a coordination point for ATP.

It belongs to the NifH/BchL/ChlL family. In terms of assembly, homodimer. Protochlorophyllide reductase is composed of three subunits; ChlL, ChlN and ChlB. [4Fe-4S] cluster is required as a cofactor.

The catalysed reaction is chlorophyllide a + oxidized 2[4Fe-4S]-[ferredoxin] + 2 ADP + 2 phosphate = protochlorophyllide a + reduced 2[4Fe-4S]-[ferredoxin] + 2 ATP + 2 H2O. Its pathway is porphyrin-containing compound metabolism; chlorophyll biosynthesis (light-independent). In terms of biological role, component of the dark-operative protochlorophyllide reductase (DPOR) that uses Mg-ATP and reduced ferredoxin to reduce ring D of protochlorophyllide (Pchlide) to form chlorophyllide a (Chlide). This reaction is light-independent. The L component serves as a unique electron donor to the NB-component of the complex, and binds Mg-ATP. This chain is Light-independent protochlorophyllide reductase iron-sulfur ATP-binding protein, found in Cyanothece sp. (strain PCC 7425 / ATCC 29141).